A 1216-amino-acid chain; its full sequence is RAB11-binding protein RELCH (1216 aa).

Disordered regions lie at residues 1 to 73 (MAAM…GLPG) and 135 to 177 (GNFE…QLNR). The residue at position 2 (Ala-2) is an N-acetylalanine. Ser-20 and Ser-22 each carry phosphoserine. The span at 21–31 (DSDEDDDEVAA) shows a compositional bias: acidic residues. A Phosphothreonine modification is found at Thr-32. Phosphoserine occurs at positions 54 and 56. Gly residues predominate over residues 148–163 (GAPGVPGAAGVGGAGG). Ser-180 and Ser-182 each carry phosphoserine. Residue Thr-183 is modified to Phosphothreonine. Phosphoserine is present on Ser-186. Positions 197 to 231 (NRETDEKVAVLEFELRKAKETIQALRANLTKAAEH) form a coiled coil. Positions 255 to 287 (EKRALNFLVNEFLLKNNYKLTSITFSDENDDQD) constitute a LisH domain. Residues 359–397 (VQKLEDKISLLNSEKWSLMEQIRRLKSEMDFLKNEHFAI) are a coiled coil. Ser-385 is modified (phosphoserine). A disordered region spans residues 401-477 (CDSVQPPLDQ…SSLSSKKTVH (77 aa)). Residues 411-435 (LPHKDSEDSGQHPDVNSSDKGKNTD) are compositionally biased toward basic and acidic residues. Ser-453 carries the phosphoserine modification. Positions 497-779 (CRMSADSRLG…SSKAKLHGEV (283 aa)) are interaction with RAB11A and RAB11B. HEAT repeat units follow at residues 601–639 (LLPQ…RSSL) and 640–679 (VLSM…KYHQ). At Ser-792 the chain carries Phosphoserine. The HEAT 3 repeat unit spans residues 1004-1042 (VAPALVTLSSDPEFSVRIATIPAFGTIMETVIQRELLER). Ser-1149 is modified (phosphoserine).

The protein resides in the recycling endosome. It is found in the golgi apparatus. The protein localises to the trans-Golgi network. Regulates intracellular cholesterol distribution from recycling endosomes to the trans-Golgi network through interactions with RAB11 and OSBP. Functions in membrane tethering and promotes OSBP-mediated cholesterol transfer between RAB11-bound recycling endosomes and OSBP-bound Golgi-like membranes. The chain is RAB11-binding protein RELCH from Homo sapiens (Human).